The chain runs to 147 residues: Transcriptional regulator MraZ (147 aa).

2 SpoVT-AbrB domains span residues 5–50 (AIAL…PLSA) and 79–122 (AQEE…SDAG).

Belongs to the MraZ family. In terms of assembly, forms oligomers.

It is found in the cytoplasm. The protein resides in the nucleoid. This is Transcriptional regulator MraZ from Aromatoleum aromaticum (strain DSM 19018 / LMG 30748 / EbN1) (Azoarcus sp. (strain EbN1)).